Consider the following 218-residue polypeptide: Probable septum site-determining protein MinC (218 aa).

It belongs to the MinC family. As to quaternary structure, interacts with MinD and FtsZ.

Cell division inhibitor that blocks the formation of polar Z ring septums. Rapidly oscillates between the poles of the cell to destabilize FtsZ filaments that have formed before they mature into polar Z rings. Prevents FtsZ polymerization. In Kosmotoga olearia (strain ATCC BAA-1733 / DSM 21960 / TBF 19.5.1), this protein is Probable septum site-determining protein MinC.